Reading from the N-terminus, the 67-residue chain is MGPKTLVPSLLCACGLRIWWTYHSLWDGGHGSQLHSHPGRWNQSQIGLLVNQSHDVTQTSGIPTSVK.

This is an uncharacterized protein from Measles virus (strain Halle) (MeV).